Reading from the N-terminus, the 804-residue chain is Cell surface sensor MSB2 (804 aa).

The first 20 residues, 1-20, serve as a signal peptide directing secretion; that stretch reads MHNFSKLAVAFVAAASFASA. The Extracellular portion of the chain corresponds to 21-694; the sequence is EPETKAKVER…TNQSATQRGT (674 aa). An N-linked (GlcNAc...) asparagine glycan is attached at Asn45. Composition is skewed to low complexity over residues 46–58 and 69–80; these read TTTP…SSTS and SSFSSSASSSSA. Disordered regions lie at residues 46-90 and 105-220; these read TTTP…RQPT and TDST…ATSN. The serine/threonine rich region (STR) stretch occupies residues 46–475; the sequence is TTTPASEASS…SVAPTSATSS (430 aa). 2 stretches are compositionally biased toward polar residues: residues 81–90 and 109–126; these read QELTASRQPT and PFSQ…SATG. Composition is skewed to low complexity over residues 128-143 and 150-169; these read VTPI…PSTA and SALT…SVTS. An N-linked (GlcNAc...) asparagine glycan is attached at Asn157. The segment covering 170–188 has biased composition (polar residues); that stretch reads PGSTSGPAGTPESSSASDF. Over residues 189-202 the composition is skewed to low complexity; sequence TSAVATSRASTATS. N-linked (GlcNAc...) asparagine glycans are attached at residues Asn298, Asn308, Asn357, and Asn393. Polar residues predominate over residues 345–394; it reads VQTLPPVSTPTANGTVTSPPVDSQTTVLPTTTPGLSSDTIVTSPGVTANS. The tract at residues 345-516 is disordered; that stretch reads VQTLPPVSTP…APTVLPSDLP (172 aa). Composition is skewed to low complexity over residues 395 to 407 and 427 to 476; these read TQVP…TIPT and NNTV…TSSA. Asn427 and Asn433 each carry an N-linked (GlcNAc...) asparagine glycan. Residues 482–641 form an HKR11-MSB2 homology domain (HMH) region; sequence WLPTTIIVQA…NGMLAHNLTM (160 aa). Over residues 493 to 508 the composition is skewed to polar residues; that stretch reads LPSTTGSSTNAPSSAP. N-linked (GlcNAc...) asparagine glycans are attached at residues Asn629, Asn638, Asn669, Asn683, and Asn686. The interval 658-689 is disordered; it reads KPAGAGSGTGGNGSNGPNDVFNNDNNSTNQSA. Residues 660–671 show a composition bias toward gly residues; the sequence is AGAGSGTGGNGS. Residues 672-686 show a composition bias toward low complexity; sequence NGPNDVFNNDNNSTN. Residues 695–715 traverse the membrane as a helical segment; the sequence is VAGIAFGAVSLAAAYGAAMFI. Residues 716–804 lie on the Cytoplasmic side of the membrane; the sequence is VARRYKKKRQ…VAQENSLGWN (89 aa). Disordered stretches follow at residues 724-748 and 762-804; these read RQAH…PALM and GVMG…LGWN. Over residues 731-744 the composition is skewed to polar residues; the sequence is SSVATPSEMRQSGS. The segment covering 774 to 787 has biased composition (low complexity); that stretch reads GSNGSGRSAGNSAR.

The protein belongs to the HKR1/MSB2 family.

It is found in the cell membrane. The protein resides in the vacuole membrane. In terms of biological role, MSB2 and SHO1 have overlapping functions in recognizing various surface signals for MAPK PMK1 activation and appressorium formation. While MSB2 is critical for sensing surface hydrophobicity and cutin monomers, SHO1 may play a more important role in recognizing rice leaf waxes. This chain is Cell surface sensor MSB2, found in Pyricularia oryzae (strain 70-15 / ATCC MYA-4617 / FGSC 8958) (Rice blast fungus).